Here is a 158-residue protein sequence, read N- to C-terminus: MRKRAAKKRPLLPDPRFNDQLVTRFVNNLMWDGKKSTAFKVFYDAIDIIETKKQNDEKTSLEIWKDALTNVMPHVEVRSRRVGGATFQIPMQIRPDRKISMAMKWLILYARRRNEKSMAQRLASECLAAAKEEGAAVKKRMDTHKMAEANKAFSHFRF.

The protein belongs to the universal ribosomal protein uS7 family. As to quaternary structure, part of the 30S ribosomal subunit. Contacts proteins S9 and S11.

In terms of biological role, one of the primary rRNA binding proteins, it binds directly to 16S rRNA where it nucleates assembly of the head domain of the 30S subunit. Is located at the subunit interface close to the decoding center, probably blocks exit of the E-site tRNA. The polypeptide is Small ribosomal subunit protein uS7 (Flavobacterium johnsoniae (strain ATCC 17061 / DSM 2064 / JCM 8514 / BCRC 14874 / CCUG 350202 / NBRC 14942 / NCIMB 11054 / UW101) (Cytophaga johnsonae)).